The chain runs to 171 residues: Endoribonuclease YbeY (171 aa).

Residues H126, H130, and H136 each coordinate Zn(2+).

The protein belongs to the endoribonuclease YbeY family. Zn(2+) is required as a cofactor.

The protein resides in the cytoplasm. Functionally, single strand-specific metallo-endoribonuclease involved in late-stage 70S ribosome quality control and in maturation of the 3' terminus of the 16S rRNA. This is Endoribonuclease YbeY from Rhizobium leguminosarum bv. trifolii (strain WSM2304).